The primary structure comprises 376 residues: Flagellin B (376 aa).

Residues 103 to 130 (SNSSSERQAIQEEVSALNDELNRIAETT) are a coiled coil.

Belongs to the bacterial flagellin family. In terms of assembly, heteromer of multiple flagellin subunits including FlaA, FlaB, FlaC, FlaD and possibly FlaE.

Its subcellular location is the secreted. The protein resides in the bacterial flagellum. Flagellin is the subunit protein which polymerizes to form the filaments of bacterial flagella. FlaB is not essential for flagellar synthesis and motility. This chain is Flagellin B (flaB), found in Vibrio anguillarum (Listonella anguillarum).